Reading from the N-terminus, the 208-residue chain is Harpin secretion protein HrpW (208 aa).

The next 4 membrane-spanning stretches (helical) occupy residues 2–22, 46–66, 149–169, and 176–196; these read LALF…CTAF, ALYG…AHDI, IGFL…NLLL, and VSPM…VSGW.

This sequence belongs to the FliP/MopC/SpaP family.

It is found in the cell membrane. Its function is as follows. Required for the secretion of harpin. This Pseudomonas syringae pv. syringae protein is Harpin secretion protein HrpW (hrpW).